The chain runs to 445 residues: Proline--tRNA ligase (445 aa).

It belongs to the class-II aminoacyl-tRNA synthetase family. ProS type 2 subfamily. As to quaternary structure, homodimer.

It is found in the cytoplasm. It carries out the reaction tRNA(Pro) + L-proline + ATP = L-prolyl-tRNA(Pro) + AMP + diphosphate. Functionally, catalyzes the attachment of proline to tRNA(Pro) in a two-step reaction: proline is first activated by ATP to form Pro-AMP and then transferred to the acceptor end of tRNA(Pro). This is Proline--tRNA ligase from Dinoroseobacter shibae (strain DSM 16493 / NCIMB 14021 / DFL 12).